The sequence spans 78 residues: Small ribosomal subunit protein bS16 (78 aa).

This sequence belongs to the bacterial ribosomal protein bS16 family.

This Maridesulfovibrio salexigens (strain ATCC 14822 / DSM 2638 / NCIMB 8403 / VKM B-1763) (Desulfovibrio salexigens) protein is Small ribosomal subunit protein bS16.